The primary structure comprises 97 residues: Apolipoprotein C-II (97 aa).

Residues 1–22 (MGSRFFLALFLALLVLGNEVQG) form the signal peptide. Residues 63 to 71 (SVDEKLRDM) are lipid binding. The segment at 75 to 97 (SSAAMTTYAGIFTDQLLTLLKGE) is lipoprotein lipase cofactor.

The protein belongs to the apolipoprotein C2 family. Proapolipoprotein C-II is synthesized as a sialic acid containing glycoprotein which is subsequently desialylated prior to its proteolytic processing. Post-translationally, proapolipoprotein C-II, the major form found in plasma undergoes proteolytic cleavage of its N-terminal hexapeptide to generate the mature form apolipoprotein C-II, which occurs as the minor form in plasma.

The protein resides in the secreted. In terms of biological role, component of chylomicrons, very low-density lipoproteins (VLDL), low-density lipoproteins (LDL), and high-density lipoproteins (HDL) in plasma. Plays an important role in lipoprotein metabolism as an activator of lipoprotein lipase. The polypeptide is Apolipoprotein C-II (Apoc2) (Rattus norvegicus (Rat)).